Reading from the N-terminus, the 527-residue chain is Peptide chain release factor 3 (527 aa).

Residues 9-278 enclose the tr-type G domain; sequence NKRRTFAIIS…GLTQWAPKPQ (270 aa). GTP-binding positions include 18 to 25, 86 to 90, and 140 to 143; these read SHPDAGKT, DTPGH, and NKLD.

Belongs to the TRAFAC class translation factor GTPase superfamily. Classic translation factor GTPase family. PrfC subfamily.

Its subcellular location is the cytoplasm. Increases the formation of ribosomal termination complexes and stimulates activities of RF-1 and RF-2. It binds guanine nucleotides and has strong preference for UGA stop codons. It may interact directly with the ribosome. The stimulation of RF-1 and RF-2 is significantly reduced by GTP and GDP, but not by GMP. The polypeptide is Peptide chain release factor 3 (Haemophilus influenzae (strain PittGG)).